The chain runs to 212 residues: Glutathione S-transferase P 1 (212 aa).

The 82-residue stretch at 2-83 (PGYVLTYFPV…YLGNKHGLTG (82 aa)) folds into the GST N-terminal domain. Glutathione contacts are provided by residues tyrosine 8, arginine 14, tryptophan 39, lysine 47, 54–55 (QL), and 67–68 (QS). Residues 85-206 (NDEERGHIDM…KSDARNKRPI (122 aa)) enclose the GST C-terminal domain.

This sequence belongs to the GST superfamily. Pi family. As to quaternary structure, homodimer. Expressed only in embryos. Not expressed in liver, lung, heart, kidney and ovary.

The protein localises to the cytoplasm. Its subcellular location is the mitochondrion. The protein resides in the nucleus. It catalyses the reaction RX + glutathione = an S-substituted glutathione + a halide anion + H(+). In terms of biological role, conjugation of reduced glutathione to a wide number of exogenous and endogenous hydrophobic electrophiles. Highly active towards 1-chloro-2,4-dinitrobenzene and organic isothiocyanates, but shows no detectable activity towards 1,2-dichloro-4-nitrobenzene, p-nitrobenzylchloride, trans-4-phenyl-3-buten-2-one (tPBO) and ethacrynic acid. May be associated with cellular proliferation. The chain is Glutathione S-transferase P 1 (gstp1) from Xenopus laevis (African clawed frog).